The chain runs to 489 residues: Alpha-amylase (489 aa).

The N-terminal stretch at 1–16 (HFKPILVLCLATLALG) is a signal peptide. Cysteine 44 and cysteine 102 are oxidised to a cystine. Asparagine 116, arginine 164, and aspartate 173 together coordinate Ca(2+). A disulfide bond links cysteine 152 and cysteine 166. Arginine 201 provides a ligand contact to chloride. Residue aspartate 203 is the Nucleophile of the active site. Histidine 207 is a binding site for Ca(2+). Glutamate 240 (proton donor) is an active-site residue. Positions 303 and 339 each coordinate chloride. Intrachain disulfides connect cysteine 372–cysteine 378 and cysteine 443–cysteine 455.

The protein belongs to the glycosyl hydrolase 13 family. Monomer. Requires Ca(2+) as cofactor. Chloride is required as a cofactor.

The enzyme catalyses Endohydrolysis of (1-&gt;4)-alpha-D-glucosidic linkages in polysaccharides containing three or more (1-&gt;4)-alpha-linked D-glucose units.. This Tribolium castaneum (Red flour beetle) protein is Alpha-amylase.